The sequence spans 254 residues: Type III pantothenate kinase (254 aa).

6 to 13 is an ATP binding site; the sequence is DLGNSAIK. Substrate contacts are provided by residues Tyr-99 and 106-109; that span reads GVDR. Asp-108 functions as the Proton acceptor in the catalytic mechanism. Asp-128 contributes to the K(+) binding site. Thr-131 provides a ligand contact to ATP. Thr-182 is a binding site for substrate.

Belongs to the type III pantothenate kinase family. As to quaternary structure, homodimer. It depends on NH4(+) as a cofactor. K(+) is required as a cofactor.

Its subcellular location is the cytoplasm. It catalyses the reaction (R)-pantothenate + ATP = (R)-4'-phosphopantothenate + ADP + H(+). Its pathway is cofactor biosynthesis; coenzyme A biosynthesis; CoA from (R)-pantothenate: step 1/5. Functionally, catalyzes the phosphorylation of pantothenate (Pan), the first step in CoA biosynthesis. The protein is Type III pantothenate kinase of Halorhodospira halophila (strain DSM 244 / SL1) (Ectothiorhodospira halophila (strain DSM 244 / SL1)).